The sequence spans 389 residues: Succinate--CoA ligase [ADP-forming] subunit beta (389 aa).

ATP-binding positions include K46, 53–55, E99, C102, and E107; that span reads GRG. Mg(2+) contacts are provided by N199 and D213. Substrate is bound by residues N264 and 321 to 323; that span reads GIV.

This sequence belongs to the succinate/malate CoA ligase beta subunit family. Heterotetramer of two alpha and two beta subunits. Mg(2+) is required as a cofactor.

It carries out the reaction succinate + ATP + CoA = succinyl-CoA + ADP + phosphate. The enzyme catalyses GTP + succinate + CoA = succinyl-CoA + GDP + phosphate. Its pathway is carbohydrate metabolism; tricarboxylic acid cycle; succinate from succinyl-CoA (ligase route): step 1/1. Functionally, succinyl-CoA synthetase functions in the citric acid cycle (TCA), coupling the hydrolysis of succinyl-CoA to the synthesis of either ATP or GTP and thus represents the only step of substrate-level phosphorylation in the TCA. The beta subunit provides nucleotide specificity of the enzyme and binds the substrate succinate, while the binding sites for coenzyme A and phosphate are found in the alpha subunit. This chain is Succinate--CoA ligase [ADP-forming] subunit beta, found in Haemophilus influenzae (strain 86-028NP).